A 144-amino-acid chain; its full sequence is Transcription antitermination protein NusB (144 aa).

The protein belongs to the NusB family.

In terms of biological role, involved in transcription antitermination. Required for transcription of ribosomal RNA (rRNA) genes. Binds specifically to the boxA antiterminator sequence of the ribosomal RNA (rrn) operons. This is Transcription antitermination protein NusB from Carboxydothermus hydrogenoformans (strain ATCC BAA-161 / DSM 6008 / Z-2901).